A 301-amino-acid chain; its full sequence is uncharacterized protein (301 aa).

Active-site charge relay system residues include Ser-44 and Tyr-107. The Proton donor role is filled by Tyr-133. The active-site Schiff-base intermediate with substrate is the Lys-162.

It belongs to the DapA family. In terms of assembly, homotetramer.

The protein localises to the cytoplasm. This is an uncharacterized protein from Pyrobaculum neutrophilum (strain DSM 2338 / JCM 9278 / NBRC 100436 / V24Sta) (Thermoproteus neutrophilus).